The following is a 108-amino-acid chain: UPF0060 membrane protein DSY4157 (108 aa).

The next 4 helical transmembrane spans lie at 6-26 (ILFILAGLAEIGGGYLVWLWL), 31-51 (PYWYGVIGAIILVFYGIIPTL), 60-80 (VYAAYGGVFIILAVLWGWGVD), and 86-106 (TYDWIGAAICLVGVTVMLWAP).

This sequence belongs to the UPF0060 family.

It is found in the cell membrane. The sequence is that of UPF0060 membrane protein DSY4157 from Desulfitobacterium hafniense (strain Y51).